Here is a 111-residue protein sequence, read N- to C-terminus: Ribonuclease P protein component (111 aa).

This sequence belongs to the RnpA family. As to quaternary structure, consists of a catalytic RNA component (M1 or rnpB) and a protein subunit.

It carries out the reaction Endonucleolytic cleavage of RNA, removing 5'-extranucleotides from tRNA precursor.. Its function is as follows. RNaseP catalyzes the removal of the 5'-leader sequence from pre-tRNA to produce the mature 5'-terminus. It can also cleave other RNA substrates such as 4.5S RNA. The protein component plays an auxiliary but essential role in vivo by binding to the 5'-leader sequence and broadening the substrate specificity of the ribozyme. In Alkaliphilus metalliredigens (strain QYMF), this protein is Ribonuclease P protein component.